The following is a 628-amino-acid chain: E3 SUMO-protein ligase PIAS3 (628 aa).

Residues 1-200 are interaction with CCAR2; it reads MAELGELKHM…QLRFCLCETS (200 aa). The SAP domain occupies 11–45; sequence VMSFRVSELQVLLGFAGRNKSGRKHELLAKALHLL. The LXXLL motif motif lies at 19-23; the sequence is LQVLL. Residues Lys46, Lys56, Lys230, and Lys307 each participate in a glycyl lysine isopeptide (Lys-Gly) (interchain with G-Cter in SUMO2) cross-link. Residues 115 to 280 enclose the PINIT domain; the sequence is MHPPLPQPVH…SLSVYLVRQL (166 aa). Residues 312 to 393 form an SP-RING-type zinc finger; that stretch reads PDSEVATTSL…FMEILNSCSD (82 aa). Zn(2+) contacts are provided by Cys343, His345, Cys366, and Cys369. An SUMO1-binding region spans residues 450–460; the sequence is LTIESSSDEED. Glycyl lysine isopeptide (Lys-Gly) (interchain with G-Cter in SUMO2) cross-links involve residues Lys466 and Lys482. Positions 571–628 are disordered; it reads GPLAPTLGSSHRSSTPAPPPGRVSSIVAPGSSLREGHGGPLPSGPSLTGCRSDVISLD.

Belongs to the PIAS family. Monomer. Interacts with PLAG1 and ZFHX3. Interacts with STAT5A; the interaction occurs on stimulation by PRL. Binds SUMO1 and UBE2I. Interacts with AR, BCL11A, HMGA2, IRF1 and NCOA2. Interacts with MITF; the interaction inhibits the transcriptional activity of MITF. Interacts with STAT3; the interaction occurs on stimulation by IL6, CNTF or OSM and inhibits the DNA binding activity of STAT3. Interacts with GFI1; the interaction relieves the inhibitory effect of PIAS3 on STAT3-mediated transcriptional activity. Interacts with MTA1. Interacts with CCAR2 (via N-terminus). Interacts with TRIM8. Interacts with PRDM1. Sumoylated. Expressed in kidney, heart, spleen, brain and cerebellum; weak expression, if any, in liver and lung.

Its subcellular location is the cytoplasm. The protein resides in the nucleus. It is found in the nucleus speckle. It participates in protein modification; protein sumoylation. Functions as an E3-type small ubiquitin-like modifier (SUMO) ligase, stabilizing the interaction between UBE2I and the substrate, and as a SUMO-tethering factor. Plays a crucial role as a transcriptional coregulation in various cellular pathways, including the STAT pathway and the steroid hormone signaling pathway. Repressor of STAT3 signaling via inhibiting STAT3 DNA-binding and suppressing cell growth. Repressor of MITF transcriptional activity. Enhances the sumoylation of MTA1 and may participate in its paralog-selective sumoylation. Sumoylates CCAR2 which promotes its interaction with SIRT1. Diminishes the sumoylation of ZFHX3 by preventing the colocalization of ZFHX3 with SUMO1 in the nucleus. The protein is E3 SUMO-protein ligase PIAS3 (Pias3) of Mus musculus (Mouse).